A 61-amino-acid polypeptide reads, in one-letter code: U-poneritoxin(01)-Om5b (61 aa).

The N-terminal stretch at 1-23 (MKLSALSLAFAIILMMTIMYTKA) is a signal peptide. The propeptide occupies 24-41 (DADASADAEADADAEAEA). Glutamine amide is present on Gln-59.

It belongs to the formicidae venom precursor-01 superfamily. In terms of processing, truncated sequences of this peptide have also been found in the venom. It is possible they have been cleaved in the venom. In terms of tissue distribution, expressed by the venom gland.

The protein localises to the secreted. Functionally, acidic peptide with potent hemolytic activities. It also shows low antimicrobial activities against E.coli (MIC=50uM), as well as histamine-releasing activity (28.3% at 10 uM). Does not have activity against S.aureus, and S.cerevisiae. This Odontomachus monticola (Trap-jaw ant) protein is U-poneritoxin(01)-Om5b.